Reading from the N-terminus, the 1272-residue chain is MEPPGGSLGPGRGTRDKKKGRSPDELPSAGGDGGKSKKFTLKRLMADELERFTSMRIKKEKEKPNSAHRNSSASYGDDPTAQSLQDVSDEQVLVLFEQMLLDMNLNEEKQQPLREKDIIIKREMVSQYLYTSKAGMSQKESSKSAMMYIQELRSGLRDMPLLSCLESLRVSLNNNPVSWVQTFGAEGLASLLDILKRLHDEKEETAGSYDSRNKHEIIRCLKAFMNNKFGIKTMLETEEGILLLVRAMDPAVPNMMIDAAKLLSALCILPQPEDMNERVLEAMTERAEMDEVERFQPLLDGLKSGTTIALKVGCLQLINALITPAEELDFRVHIRSELMRLGLHQVLQDLREIENEDMRVQLNVFDEQGEEDSYDLKGRLDDIRMEMDDFNEVFQILLNTVKDSKAEPHFLSILQHLLLVRNDYEARPQYYKLIEECISQIVLHKNGADPDFKCRHLQIEIEGLIDQMIDKTKVEKSEAKAAELEKKLDSELTARHELQVEMKKMESDFEQKLQDLQGEKDALHSEKQQIATEKQDLEAEVSQLTGEVAKLTKELEDAKKEMASLSAAAITVPPSVPSRAPVPPAPPLPGDSGTIIPPPPAPGDSTTPPPPPPPPPPPPPLPGGVCISSPPSLPGGTAISPPPPLSGDATIPPPPPLPEGVGIPSPSSLPGGTAIPPPPPLPGSARIPPPPPPLPGSAGIPPPPPPLPGEAGMPPPPPPLPGGPGIPPPPPFPGGPGIPPPPPGMGMPPPPPFGFGVPAAPVLPFGLTPKKLYKPEVQLRRPNWSKLVAEDLSQDCFWTKVKEDRFENNELFAKLTLTFSAQTKTSKAKKDQEGGEEKKSVQKKKVKELKVLDSKTAQNLSIFLGSFRMPYQEIKNVILEVNEAVLTESMIQNLIKQMPEPEQLKMLSELKDEYDDLAESEQFGVVMGTVPRLRPRLNAILFKLQFSEQVENIKPEIVSVTAACEELRKSESFSNLLEITLLVGNYMNAGSRNAGAFGFNISFLCKLRDTKSTDQKMTLLHFLAELCENDYPDVLKFPDELAHVEKASRVSAENLQKNLDQMKKQISDVERDVQNFPAATDEKDKFVEKMTSFVKDAQEQYNKLRMMHSNMETLYKELGEYFLFDPKKLSVEEFFMDLHNFRNMFLQAVKENQKRRETEEKMRRAKLAKEKAEKERLEKQQKREQLIDMNAEGDETGVMDSLLEALQSGAAFRRKRGPRQANRKAGCAVTSLLASELTKDDAMAAVPAKVSKNSETFPTILEEAKELVGRAS.

Methionine 1 bears the N-acetylmethionine mark. Gly residues predominate over residues 1–12 (MEPPGGSLGPGR). The disordered stretch occupies residues 1 to 84 (MEPPGGSLGP…YGDDPTAQSL (84 aa)). Phosphoserine occurs at positions 7, 22, and 36. A compositionally biased stretch (basic and acidic residues) spans 44 to 65 (LMADELERFTSMRIKKEKEKPN). Positions 67–84 (AHRNSSASYGDDPTAQSL) are enriched in polar residues. Residues 84–449 (LQDVSDEQVL…QIVLHKNGAD (366 aa)) form the GBD/FH3 domain. Positions 468–572 (MIDKTKVEKS…ASLSAAAITV (105 aa)) form a coiled coil. Residues 573-755 (PPSVPSRAPV…GMPPPPPFGF (183 aa)) form a disordered region. Pro residues-rich tracts occupy residues 574 to 589 (PSVP…PPLP), 596 to 622 (IPPP…PPLP), and 640 to 658 (SPPP…PPLP). The FH1 domain maps to 583-764 (PPAPPLPGDS…FGVPAAPVLP (182 aa)). Residues 659–674 (EGVGIPSPSSLPGGTA) show a composition bias toward low complexity. The span at 675 to 753 (IPPPPPLPGS…GMGMPPPPPF (79 aa)) shows a compositional bias: pro residues. Threonine 768 is subject to Phosphothreonine. In terms of domain architecture, FH2 spans 769-1171 (PKKLYKPEVQ…MRRAKLAKEK (403 aa)). The stretch at 1039–1196 (DELAHVEKAS…IDMNAEGDET (158 aa)) forms a coiled coil. Residues lysine 1057 and lysine 1103 each carry the N6-acetyllysine modification. A Phosphotyrosine modification is found at tyrosine 1121. One can recognise a DAD domain in the interval 1194–1222 (DETGVMDSLLEALQSGAAFRRKRGPRQAN). 2 positions are modified to phosphoserine: serine 1251 and serine 1254.

The protein belongs to the formin homology family. Diaphanous subfamily. In terms of assembly, homodimer. Interacts with the GTP-bound form of RHOA. Interacts with RHOC, PFY1, MAPRE1 and BAIAP2. Interacts with APC; acts as a scaffold protein for MAPRE1 and APC to stabilize microtubules and promote cell migration. Interacts with SCAI. Interacts with DCAF7, via FH2 domain. Interacts with NCDN. Interacts with OSBPL10, OSBPL2, VIM, TUBB and DYN1. Post-translationally, phosphorylation at Thr-768 is stimulated by cAMP and regulates stability, complex formation and mitochondrial movement. Expressed in brain, heart, placenta, lung, kidney, pancreas, liver, skeletal muscle and cochlea. Expressed in platelets.

Its subcellular location is the cell membrane. It localises to the cell projection. The protein localises to the ruffle membrane. It is found in the cytoplasm. The protein resides in the cytoskeleton. Its subcellular location is the microtubule organizing center. It localises to the centrosome. The protein localises to the spindle. It is found in the nucleus. Functionally, actin nucleation and elongation factor required for the assembly of F-actin structures, such as actin cables and stress fibers. Binds to the barbed end of the actin filament and slows down actin polymerization and depolymerization. Required for cytokinesis, and transcriptional activation of the serum response factor. DFR proteins couple Rho and Src tyrosine kinase during signaling and the regulation of actin dynamics. Functions as a scaffold protein for MAPRE1 and APC to stabilize microtubules and promote cell migration. Has neurite outgrowth promoting activity. Acts in a Rho-dependent manner to recruit PFY1 to the membrane. In hear cells, it may play a role in the regulation of actin polymerization in hair cells. The MEMO1-RHOA-DIAPH1 signaling pathway plays an important role in ERBB2-dependent stabilization of microtubules at the cell cortex. It controls the localization of APC and CLASP2 to the cell membrane, via the regulation of GSK3B activity. In turn, membrane-bound APC allows the localization of the MACF1 to the cell membrane, which is required for microtubule capture and stabilization. Plays a role in the regulation of cell morphology and cytoskeletal organization. Required in the control of cell shape. Plays a role in brain development. Also acts as an actin nucleation and elongation factor in the nucleus by promoting nuclear actin polymerization inside the nucleus to drive serum-dependent SRF-MRTFA activity. This Homo sapiens (Human) protein is Protein diaphanous homolog 1 (DIAPH1).